The primary structure comprises 481 residues: Velvet complex subunit B (481 aa).

Disordered stretches follow at residues 1-157 and 241-339; these read MNSA…YSKI and GTGA…NGYG. 3 stretches are compositionally biased toward pro residues: residues 36 to 45, 53 to 62, and 96 to 112; these read HPPPPLPPPS, PPLPPPPSAP, and PYAP…QYPR. The 305-residue stretch at 160–464 folds into the Velvet domain; the sequence is GSGWKYSLDV…ANQGIKIPIR (305 aa). 2 stretches are compositionally biased toward low complexity: residues 241 to 255 and 293 to 325; these read GTGA…TYSS and QQSY…SAEP.

The protein belongs to the velvet family. VelB subfamily. As to quaternary structure, component of the heterotrimeric velvet complex composed of laeA, veA and velB; VeA acting as a bridging protein between laeA and velB. Forms a heterodimeric complex with vosA; the formation of the velB-vosA complex is light-dependent.

Its subcellular location is the nucleus. It localises to the cytoplasm. In terms of biological role, component of the velvet transcription factor complex that controls sexual/asexual developmental ratio in response to light, promoting sexual development in the darkness while stimulating asexual sporulation under illumination. The velvet complex acts as a global regulator for secondary metabolite gene expression. Component of the velB-VosA heterodimeric complex that plays a dual role in activating genes associated with spore maturation and repressing certain development-associated genes. The velB-VosA complex binds DNA through the DNA-binding domain of vosA that recognizes an 11-nucleotide consensus sequence 5'-CTGGCCGCGGC-3' consisting of two motifs in the promoters of key developmental regulatory genes. Controls the biosynthetic gene cluster for beauvericin, a depsipeptide mycotoxin that functions as a virulence determinant. Also regulates chromatin structure and transcription of siderophore biosynthetic genes and is required for infection of tomato plants. The chain is Velvet complex subunit B from Fusarium oxysporum f. sp. lycopersici (strain 4287 / CBS 123668 / FGSC 9935 / NRRL 34936) (Fusarium vascular wilt of tomato).